Reading from the N-terminus, the 72-residue chain is MMPQLETATYLTQYRWTLIALFLLFSFLVVSVLPAVKTNFLIRRSIGAGWTGAPKTSDLNKGPASLWSWDKI.

A helical transmembrane segment spans residues 16–36 (WTLIALFLLFSFLVVSVLPAV).

This sequence belongs to the ATPase protein 8 family. In terms of assembly, F-type ATPases have 2 components, CF(1) - the catalytic core - and CF(0) - the membrane proton channel.

The protein resides in the mitochondrion membrane. Functionally, mitochondrial membrane ATP synthase (F(1)F(0) ATP synthase or Complex V) produces ATP from ADP in the presence of a proton gradient across the membrane which is generated by electron transport complexes of the respiratory chain. F-type ATPases consist of two structural domains, F(1) - containing the extramembraneous catalytic core and F(0) - containing the membrane proton channel, linked together by a central stalk and a peripheral stalk. During catalysis, ATP synthesis in the catalytic domain of F(1) is coupled via a rotary mechanism of the central stalk subunits to proton translocation. Part of the complex F(0) domain. Minor subunit located with subunit a in the membrane. The polypeptide is ATP synthase protein 8 (MTATP8) (Metridium senile (Brown sea anemone)).